A 146-amino-acid polypeptide reads, in one-letter code: Large ribosomal subunit protein bL21 (146 aa).

Residues 117–146 (ITIGKSAPKSSSKKETVKKETKPKSEKSTN) form a disordered region. Basic and acidic residues predominate over residues 128-146 (SKKETVKKETKPKSEKSTN).

It belongs to the bacterial ribosomal protein bL21 family. As to quaternary structure, part of the 50S ribosomal subunit. Contacts protein L20.

Functionally, this protein binds to 23S rRNA in the presence of protein L20. In Prochlorococcus marinus (strain MIT 9301), this protein is Large ribosomal subunit protein bL21.